The following is a 218-amino-acid chain: Small ribosomal subunit protein mS34 (218 aa).

The interval 178 to 218 (RQKNGDPSTEEPMLSLERIRTDPWDYPENQEAKKKTKGTAV) is disordered.

It belongs to the mitochondrion-specific ribosomal protein mS34 family. As to quaternary structure, component of the mitochondrial ribosome small subunit (28S) which comprises a 12S rRNA and about 30 distinct proteins.

The protein resides in the mitochondrion. Its function is as follows. Required for mitochondrial translation, plays a role in maintaining the stability of the small ribosomal subunit and the 12S rRNA that are required for mitoribosome formation. This is Small ribosomal subunit protein mS34 from Bos taurus (Bovine).